Consider the following 124-residue polypeptide: Small ribosomal subunit protein uS12 (124 aa).

Asp-89 is modified (3-methylthioaspartic acid).

It belongs to the universal ribosomal protein uS12 family. Part of the 30S ribosomal subunit. Contacts proteins S8 and S17. May interact with IF1 in the 30S initiation complex.

In terms of biological role, with S4 and S5 plays an important role in translational accuracy. Its function is as follows. Interacts with and stabilizes bases of the 16S rRNA that are involved in tRNA selection in the A site and with the mRNA backbone. Located at the interface of the 30S and 50S subunits, it traverses the body of the 30S subunit contacting proteins on the other side and probably holding the rRNA structure together. The combined cluster of proteins S8, S12 and S17 appears to hold together the shoulder and platform of the 30S subunit. This is Small ribosomal subunit protein uS12 from Leptospira biflexa serovar Patoc (strain Patoc 1 / Ames).